The primary structure comprises 2388 residues: Highly reducing polyketide synthase Preu1 (2388 aa).

The 426-residue stretch at 7–432 (NDDIAIVGLA…GTNAHVILDD (426 aa)) folds into the Ketosynthase family 3 (KS3) domain. Residues cysteine 180, histidine 315, and histidine 355 each act as for beta-ketoacyl synthase activity in the active site. The segment at 549-875 (GFVFTGQGAQ…SSVLMRGEDG (327 aa)) is malonyl-CoA:ACP transacylase (MAT) domain. Serine 641 functions as the For malonyltransferase activity in the catalytic mechanism. Residues 940-1074 (HDLLGAPTQD…GLGKIHYRPE (135 aa)) form an N-terminal hotdog fold region. Residues 940 to 1256 (HDLLGAPTQD…CRELPNGNSQ (317 aa)) enclose the PKS/mFAS DH domain. The segment at 941–1251 (DLLGAPTQDS…VEGLRCRELP (311 aa)) is dehydratase (DH) domain. The Proton acceptor; for dehydratase activity role is filled by histidine 972. A C-terminal hotdog fold region spans residues 1102–1256 (TASISPVDFY…CRELPNGNSQ (155 aa)). Aspartate 1167 acts as the Proton donor; for dehydratase activity in catalysis. The segment at 1676–1983 (KLPSDARFTS…VPTGLGKAVL (308 aa)) is enoyl reductase (ER) domain. The interval 2007–2191 (ATYVLAGGLG…AATSVDLGLM (185 aa)) is ketoreductase (KR) domain. Positions 2303–2380 (QANGIVLEAL…ALAEKISKAS (78 aa)) constitute a Carrier domain. O-(pantetheine 4'-phosphoryl)serine is present on serine 2340.

The cofactor is pantetheine 4'-phosphate.

Functionally, highly reducing polyketide synthase; part of a gene cluster that mediates the biosynthesis of a yet unidentified natural product. The polypeptide is Highly reducing polyketide synthase Preu1 (Preussia isomera (Coprophilous fungus)).